Reading from the N-terminus, the 148-residue chain is Lysozyme C (148 aa).

A signal peptide spans 1-18; that stretch reads MKVLVILGLVLLSVMVQG. Residues 19–148 enclose the C-type lysozyme domain; sequence KVFERCELAR…VSQYVQGCGV (130 aa). Disulfide bonds link Cys-24-Cys-146, Cys-48-Cys-134, Cys-83-Cys-99, and Cys-95-Cys-113. Residues Glu-53 and Asp-71 contribute to the active site.

Belongs to the glycosyl hydrolase 22 family. In terms of assembly, monomer.

The protein localises to the secreted. The enzyme catalyses Hydrolysis of (1-&gt;4)-beta-linkages between N-acetylmuramic acid and N-acetyl-D-glucosamine residues in a peptidoglycan and between N-acetyl-D-glucosamine residues in chitodextrins.. Its function is as follows. Lysozymes have primarily a bacteriolytic function; those in tissues and body fluids are associated with the monocyte-macrophage system and enhance the activity of immunoagents. This is Lysozyme C (LYZ) from Saimiri sciureus (Common squirrel monkey).